The chain runs to 66 residues: Large ribosomal subunit protein bL33c (66 aa).

This sequence belongs to the bacterial ribosomal protein bL33 family.

Its subcellular location is the plastid. The protein localises to the chloroplast. This Phalaenopsis aphrodite subsp. formosana (Moth orchid) protein is Large ribosomal subunit protein bL33c.